The sequence spans 697 residues: tRNA 5-methylaminomethyl-2-thiouridine biosynthesis bifunctional protein MnmC (697 aa).

The tRNA (mnm(5)s(2)U34)-methyltransferase stretch occupies residues 1-275; sequence MTAKPHKSCQ…KPATLAAIDH (275 aa). The segment at 280 to 697 is FAD-dependent cmnm(5)s(2)U34 oxidoreductase; it reads VGGGLASANL…LRKLLKGKAL (418 aa).

It in the N-terminal section; belongs to the methyltransferase superfamily. tRNA (mnm(5)s(2)U34)-methyltransferase family. The protein in the C-terminal section; belongs to the DAO family. It depends on FAD as a cofactor.

It is found in the cytoplasm. The catalysed reaction is 5-aminomethyl-2-thiouridine(34) in tRNA + S-adenosyl-L-methionine = 5-methylaminomethyl-2-thiouridine(34) in tRNA + S-adenosyl-L-homocysteine + H(+). Functionally, catalyzes the last two steps in the biosynthesis of 5-methylaminomethyl-2-thiouridine (mnm(5)s(2)U) at the wobble position (U34) in tRNA. Catalyzes the FAD-dependent demodification of cmnm(5)s(2)U34 to nm(5)s(2)U34, followed by the transfer of a methyl group from S-adenosyl-L-methionine to nm(5)s(2)U34, to form mnm(5)s(2)U34. This is tRNA 5-methylaminomethyl-2-thiouridine biosynthesis bifunctional protein MnmC from Shewanella sp. (strain ANA-3).